Here is a 199-residue protein sequence, read N- to C-terminus: Thymidine kinase (199 aa).

Residues 9 to 16 (GAMSSGKT) and 93 to 96 (DEAQ) contribute to the ATP site. Residue Glu-94 is the Proton acceptor of the active site. Zn(2+) contacts are provided by Cys-151, Cys-154, Cys-188, and His-191.

It belongs to the thymidine kinase family. In terms of assembly, homotetramer.

The protein localises to the cytoplasm. The catalysed reaction is thymidine + ATP = dTMP + ADP + H(+). The chain is Thymidine kinase from Lactobacillus acidophilus (strain ATCC 700396 / NCK56 / N2 / NCFM).